Reading from the N-terminus, the 137-residue chain is uncharacterized protein (137 aa).

4 consecutive transmembrane segments (helical) span residues 20–39, 44–61, 86–105, and 109–131; these read YGKI…GYAV, WFIT…LSLV, VEIF…ALDL, and AALA…YGYY.

The protein resides in the cell membrane. This is an uncharacterized protein from Archaeoglobus fulgidus (strain ATCC 49558 / DSM 4304 / JCM 9628 / NBRC 100126 / VC-16).